A 281-amino-acid chain; its full sequence is Bifunctional N-acyl-homoserine lactone acylase/prephenate dehydratase (281 aa).

The 176-residue stretch at 6–181 (IIAFQGRPGA…NTTRFYIASR (176 aa)) folds into the Prephenate dehydratase domain. An ACT domain is found at 196–273 (TLLFRVNNQP…EQQEILGVYP (78 aa)). 4 residues coordinate L-phenylalanine: alanine 207, leucine 208, asparagine 221, and methionine 222.

Homodimer.

It carries out the reaction an N-acyl-L-homoserine lactone + H2O = L-homoserine lactone + a carboxylate. The enzyme catalyses prephenate + H(+) = 3-phenylpyruvate + CO2 + H2O. It functions in the pathway amino-acid biosynthesis; L-phenylalanine biosynthesis; phenylpyruvate from prephenate: step 1/1. Its function is as follows. Multifunctional enzyme that acts on N-acyl-homoserine lactones (AHLs), beta-lactam antibiotics and shows prephenate dehydratase activity. Acts as an acylase on AHL and hydrolyzes the amide bond of the acyl side-chain of AHL molecules, releasing homoserine lactone (HSL) and the fatty acid. Can use different 3-oxo-acyl homoserine lactones, such as 3-oxo-decanoyl homoserine lactone, which is the preferred substrate, 3-oxo-octanoyl homoserine lactone, 3-oxo-hexanoyl homoserine lactone and 3-oxo-dodecanoyl homoserine lactone. It can also degrade various beta-lactam antibiotics, including penicillin G, amoxicillin and ampicillin, but not cefotaxime. In addition, it can complement a phenylalanine auxotrophic E.coli mutant, which carries a kanamycin gene inserted into pheA, suggesting that GqqA can also function as a prephenate dehydratase. Involved in bacterial quorum quenching (QQ) and cellulose biofilm formation. This is Bifunctional N-acyl-homoserine lactone acylase/prephenate dehydratase from Komagataeibacter europaeus (Gluconacetobacter europaeus).